A 563-amino-acid chain; its full sequence is Nicalin (563 aa).

Positions 1–29 are cleaved as a signal peptide; it reads MQDEIIDFFRSPALLFYMTLMLTICVVNG. Topologically, residues 30-522 are lumenal; the sequence is SQQVGEVVET…NRLVAERVKP (493 aa). Asparagine 232 is a glycosylation site (N-linked (GlcNAc...) asparagine). A helical membrane pass occupies residues 523–543; sequence AVFELVIAAGVFTYLSAFYYI. Residues 544–563 lie on the Cytoplasmic side of the membrane; that stretch reads ATHSQNTIEGTVAAIRKSIF.

Belongs to the nicastrin family. In terms of assembly, may interact with the levamisole-sensitive nicotinic acetylcholine receptor (L-AChR). May interact with nra-4 in the ER. As to expression, expressed in body wall, pharyngeal, and vulval muscles, excretory canal cell, head and motor neurons, and vulval epithelium.

Its subcellular location is the endoplasmic reticulum membrane. Functionally, involved in the recognition and selection of protein complexes to exit the endoplasmic reticulum (ER). In muscles, regulates levamisole-sensitive nicotinic acetylcholine receptor (L-AChR) subunit composition, possibly by allowing only specific L-AChR subunit combinations to exit the ER. Specifically, may promote the inclusion of alpha subunits unc-38 and unc-29 into L-AChR. Regulates L-AChR sensitivity to agonists such as nicotine and levamisole at neuro-muscular junctions. In touch neurons, may prevent ER exit of incorrectly folded mec-4-mec-10 ion channel. The protein is Nicalin of Caenorhabditis elegans.